The following is a 1019-amino-acid chain: Collagen alpha-2(VI) chain (1019 aa).

An N-terminal signal peptide occupies residues 1-20 (MLQGTCSVLLLWGILGAIQA). Residues 21–256 (QQQEVISPDT…YKVSCLEIPG (236 aa)) form a nonhelical region region. The VWFA 1 domain occupies 46-234 (HVYFVLDTSE…EIDQDTINRI (189 aa)). N-linked (GlcNAc...) asparagine glycosylation occurs at Asn140. The disordered stretch occupies residues 257-588 (PSGPKGYRGQ…GEPGPPGDPG (332 aa)). The interval 257–590 (PSGPKGYRGQ…PGPPGDPGLT (334 aa)) is triple-helical region. Over residues 287 to 305 (DPGIEGPIGFPGPKGVPGF) the composition is skewed to low complexity. Basic and acidic residues predominate over residues 306 to 318 (KGEKGEFGADGRK). Residue Asn327 is glycosylated (N-linked (GlcNAc...) asparagine). Composition is skewed to basic and acidic residues over residues 365–377 (ERGDQGGKGDPGR) and 419–429 (PKGEPGRRGDP). Short sequence motifs (cell attachment site) lie at residues 366-368 (RGD), 426-428 (RGD), 489-491 (RGD), 498-500 (RGD), and 539-541 (RGD). Basic and acidic residues predominate over residues 524–557 (PGEKGEPGPRGPEGGRGDFGLKGEPGRKGEKGEP). Residues 559–569 (DPGPPGEPGPR) are compositionally biased toward pro residues. The tract at residues 591–1019 (ECDVMTYVRE…FFDRFIRWIC (429 aa)) is nonhelical region. 2 consecutive VWFA domains span residues 615–805 (DVVF…EDVL) and 833–1014 (DIVF…FDRF). Asn630 carries N-linked (GlcNAc...) asparagine glycosylation. Position 701 is a phosphothreonine (Thr701). Residue Ser705 is modified to Phosphoserine. N-linked (GlcNAc...) asparagine glycosylation is found at Asn785, Asn897, and Asn954.

Belongs to the type VI collagen family. As to quaternary structure, trimers composed of three different chains: alpha-1(VI), alpha-2(VI), and alpha-3(VI) or alpha-5(VI) or alpha-6(VI). Interacts with CSPG4. Prolines at the third position of the tripeptide repeating unit (G-X-Y) are hydroxylated in some or all of the chains.

It is found in the secreted. The protein localises to the extracellular space. It localises to the extracellular matrix. Its subcellular location is the membrane. Its function is as follows. Collagen VI acts as a cell-binding protein. This chain is Collagen alpha-2(VI) chain (COL6A2), found in Homo sapiens (Human).